Here is a 302-residue protein sequence, read N- to C-terminus: Phosphoribosylaminoimidazole-succinocarboxamide synthase (302 aa).

It belongs to the SAICAR synthetase family.

It carries out the reaction 5-amino-1-(5-phospho-D-ribosyl)imidazole-4-carboxylate + L-aspartate + ATP = (2S)-2-[5-amino-1-(5-phospho-beta-D-ribosyl)imidazole-4-carboxamido]succinate + ADP + phosphate + 2 H(+). It participates in purine metabolism; IMP biosynthesis via de novo pathway; 5-amino-1-(5-phospho-D-ribosyl)imidazole-4-carboxamide from 5-amino-1-(5-phospho-D-ribosyl)imidazole-4-carboxylate: step 1/2. The protein is Phosphoribosylaminoimidazole-succinocarboxamide synthase of Cupriavidus necator (strain ATCC 17699 / DSM 428 / KCTC 22496 / NCIMB 10442 / H16 / Stanier 337) (Ralstonia eutropha).